A 2533-amino-acid polypeptide reads, in one-letter code: Highly reducing polyketide synthase azaB (2533 aa).

The Ketosynthase family 3 (KS3) domain occupies 7–433; it reads TAPMAIIGMA…GSNAHAILES (427 aa). Active-site for beta-ketoacyl synthase activity residues include Cys180, His315, and His355. Residues 554–821 are malonyl-CoA:ACP transacylase (MAT) domain; the sequence is WVFTGQGAQW…VEFESSFRHM (268 aa). The N-terminal hotdog fold stretch occupies residues 946 to 1081; that stretch reads SDLVGYSQPS…GRISVITTSD (136 aa). The PKS/mFAS DH domain maps to 946 to 1254; that stretch reads SDLVGYSQPS…CQSLGRALDR (309 aa). The segment at 947–1251 is dehydratase (DH) domain; it reads DLVGYSQPSI…GLTCQSLGRA (305 aa). Residue His978 is the Proton acceptor; for dehydratase activity of the active site. The C-terminal hotdog fold stretch occupies residues 1097–1254; sequence YNRRIDPRYM…CQSLGRALDR (158 aa). The active-site Proton donor; for dehydratase activity is Asp1163. Positions 1419–1554 are methyltransferase (CMet) domain; it reads TRQVSELVRL…GGKLILMETT (136 aa). The tract at residues 1839–2155 is enoyl reductase (ER) domain; the sequence is GLIDTLVFHD…TGQHMGKIII (317 aa). The interval 2178–2349 is ketoreductase (KR) domain; the sequence is ASYVIVGGLG…AVSLDLGIVR (172 aa). The 78-residue stretch at 2455–2532 folds into the Carrier domain; it reads DAAALICQEL…DLSLRVATKR (78 aa). Ser2492 is modified (O-(pantetheine 4'-phosphoryl)serine).

It participates in secondary metabolite biosynthesis. Its function is as follows. Highly reducing polyketide synthase; part of the gene cluster that mediates the biosynthesis of azaphilones, a class of fungal metabolites characterized by a highly oxygenated pyrano-quinone bicyclic core and exhibiting a broad range of bioactivities. In the first step, the non-reducing polyketide synthase azaA forms the hexaketide precursor from successive condensations of five malonyl-CoA units, presumably with a simple acetyl-CoA starter unit. The reactive polyketide chain then undergoes a PT-mediated C2-C7 cyclization to afford the aromatic ring and is eventually released as an aldehyde through the R-domain. The putative ketoreductase azaE is proposed to catalyze the reduction of the terminal ketone resulting in the early culture product FK17-P2a. The monooxygenase azaH was demonstrated to be the only enzyme required to convert FK17-P2a to azanigerone E. AzaH first hydroxylates the benzaldehyde intermediate FK17-P2a at C4, which triggers the formation of the pyran-ring to afford azanigerone E. In parallel, the 2,4-dimethylhexanoyl chain is synthesized by the HR-PKS azaB and is proposed to be transferred to the C4-hydroxyl of azanigerone E by the acyltransferase azaD directly from the ACP domain of azaB. Alternatively, the 2,4-dimethyl-hexanoyl chain may be offloaded from the HR-PKS as a carboxylic acid and converted to an acyl-CoA by azaF. The resulting acyl-CoA molecule could then be taken up as a substrate by AzaD to form azanigerone B. To yield the carboxylic acid substituent in azanigerone A, the hydroxypropyl side chain of azanigerone B would need to undergo a C-C oxidative cleavage catalyzed by cytochrome P450 AzaI. AzaI is proposed to act on a vicinal diol that leads to a C-C bond scission either through an alkoxyradical intermediate or a peroxy complex. In the biosynthesis of azanigerone A, azanigerone B first undergoes hydroxylation at C10, possibly catalyzed by one of the two FAD-dependent monooxygenases encoded in the cluster, azaG or azaL, resulting in the vicinal diol azanigerone C. Oxidative cleavage of azanigerone C by azaI would yield the corresponding aldehyde derivative of azanigerone A. Finally, the dehydrogenase azaJ is proposed to convert the aldehyde functional group into the carboxylic acid, completing the conversion from azanigerone B to azanigerone A. Alternatively, the oxidation of aldehyde to carboxylic acid may be catalyzed by the same P450 enzyme azaI via consecutive oxidation or by endogenous alcohol dehydrogenase. The protein is Highly reducing polyketide synthase azaB of Aspergillus niger (strain ATCC 1015 / CBS 113.46 / FGSC A1144 / LSHB Ac4 / NCTC 3858a / NRRL 328 / USDA 3528.7).